Here is a 274-residue protein sequence, read N- to C-terminus: 2,3,4,5-tetrahydropyridine-2,6-dicarboxylate N-succinyltransferase (274 aa).

Positions 107 and 144 each coordinate substrate.

It belongs to the transferase hexapeptide repeat family. Homotrimer.

The protein localises to the cytoplasm. It carries out the reaction (S)-2,3,4,5-tetrahydrodipicolinate + succinyl-CoA + H2O = (S)-2-succinylamino-6-oxoheptanedioate + CoA. Its pathway is amino-acid biosynthesis; L-lysine biosynthesis via DAP pathway; LL-2,6-diaminopimelate from (S)-tetrahydrodipicolinate (succinylase route): step 1/3. This chain is 2,3,4,5-tetrahydropyridine-2,6-dicarboxylate N-succinyltransferase, found in Cereibacter sphaeroides (strain ATCC 17023 / DSM 158 / JCM 6121 / CCUG 31486 / LMG 2827 / NBRC 12203 / NCIMB 8253 / ATH 2.4.1.) (Rhodobacter sphaeroides).